We begin with the raw amino-acid sequence, 727 residues long: Polyribonucleotide nucleotidyltransferase (727 aa).

Residues D488 and D494 each contribute to the Mg(2+) site. A KH domain is found at 555-614 (PKLYTMKINPEKIRDVIGKGGATIRALTDETGCQINIEEDGTITIAATEAAKADEAKRRI). The region spanning 624–692 (GKIYEGPVTK…DKGRVKLSMK (69 aa)) is the S1 motif domain. Residues 691-727 (MKALADRPAGDSGRPAPAERGERRERRDGGASEQQQQ) are disordered. A compositionally biased stretch (basic and acidic residues) spans 707–720 (PAERGERRERRDGG).

The protein belongs to the polyribonucleotide nucleotidyltransferase family. Requires Mg(2+) as cofactor.

The protein resides in the cytoplasm. It catalyses the reaction RNA(n+1) + phosphate = RNA(n) + a ribonucleoside 5'-diphosphate. Its function is as follows. Involved in mRNA degradation. Catalyzes the phosphorolysis of single-stranded polyribonucleotides processively in the 3'- to 5'-direction. The sequence is that of Polyribonucleotide nucleotidyltransferase from Acidovorax sp. (strain JS42).